The sequence spans 125 residues: Large ribosomal subunit protein bL12 (125 aa).

It belongs to the bacterial ribosomal protein bL12 family. Homodimer. Part of the ribosomal stalk of the 50S ribosomal subunit. Forms a multimeric L10(L12)X complex, where L10 forms an elongated spine to which 2 to 4 L12 dimers bind in a sequential fashion. Binds GTP-bound translation factors.

Forms part of the ribosomal stalk which helps the ribosome interact with GTP-bound translation factors. Is thus essential for accurate translation. The sequence is that of Large ribosomal subunit protein bL12 from Variovorax paradoxus (strain S110).